Consider the following 37-residue polypeptide: Large ribosomal subunit protein bL36 (37 aa).

Belongs to the bacterial ribosomal protein bL36 family.

This chain is Large ribosomal subunit protein bL36, found in Marinobacter nauticus (strain ATCC 700491 / DSM 11845 / VT8) (Marinobacter aquaeolei).